The primary structure comprises 874 residues: MAAGRRVGPGPPSRPTMAPWKKKRLRKRRTGASQGRDSDSDDGEFEIQAEDDARARKLGPGRALPSFPTSECVSDVEPDTREMVRAQNKKKKKSGGFQSMGLSYPVFKGIMKKGYKVPTPIQRKTIPVILDGKDVVAMARTGSGKTACFLLPMFERLKARSAQTGARALILSPTRELALQTMKFTKELGKFTGLKTALILGGDKMEDQFAALHENPDIIIATPGRLVHVAVEMNLKLQSVEYVVFDEADRLFEMGFAEQLQEIIGRLPGGHQTVLFSATLPKLLVEFARAGLTEPVLIRLDVDSKLNEQLKTSFLLVREDTKAAVLLYLLQNVVRPQDQTVVFVATKHHAEYLTELLMGQGVSCAHIYSALDQTARKINLAKFTHNKCSTLIVTDLAARGLDIPLLDNVINYSFPAKGKLFLHRVGRVARAGRSGTAYSLVAPDEVPYLLDLHLFLGRSVTLARPCEEPSVADAVGRDGVLGRVPQSVVDDEDSSLQTAMGASLDLQGLHRVANNAQQQYVRSRPAPSPESIKRAKELDLAELGLHPLFSSCFEEGELQRLRLVDSIKNYRTRTTIFEINASSKDPSSQMMRAKRQRDRKAVASFQQRRQERQEGPADPAPQRELPQEEEEEMVETVEGVFTEVVGQKRPRPGPSQGAKRRRMETRQRDQEFYVPYRPKDFDSERGLSVSGAGGAFEQQVAGAVLDLMGDEAQNMSRGQQQLKWDRKKKRFVGQSGQEDKKKIKTESGRFISSSYKRDLYQKWKQKQKIDDRDSEEEGPSNQRGPGPRRGGKRGRSQGTSQPRASSVPAGRMRSELKTKEQILKQRRQAQKQRFLQRGGLKQLSARNRRRAQELRQGAFGRGAPSRKGKMRKRM.

A disordered region spans residues 1 to 76 (MAAGRRVGPG…FPTSECVSDV (76 aa)). The span at 20-30 (WKKKRLRKRRT) shows a compositional bias: basic residues. Thr30 is modified (phosphothreonine). 4 positions are modified to phosphoserine: Ser33, Ser38, Ser40, and Ser74. Positions 39-50 (DSDDGEFEIQAE) are enriched in acidic residues. Residues 95-123 (GGFQSMGLSYPVFKGIMKKGYKVPTPIQR) carry the Q motif motif. A Helicase ATP-binding domain is found at 126–298 (IPVILDGKDV…RAGLTEPVLI (173 aa)). Residue 139-146 (ARTGSGKT) coordinates ATP. Positions 246–249 (DEAD) match the DEAD box motif. A Helicase C-terminal domain is found at 328-472 (YLLQNVVRPQ…ARPCEEPSVA (145 aa)). Over residues 581–590 (ASSKDPSSQM) the composition is skewed to polar residues. Positions 581 to 687 (ASSKDPSSQM…PKDFDSERGL (107 aa)) are disordered. The segment covering 636-645 (TVEGVFTEVV) has biased composition (low complexity). Residues 664–685 (ETRQRDQEFYVPYRPKDFDSER) are compositionally biased toward basic and acidic residues. 2 positions are modified to phosphoserine: Ser688 and Ser690. Residues 712 to 874 (AQNMSRGQQQ…SRKGKMRKRM (163 aa)) form a disordered region. Polar residues predominate over residues 713 to 722 (QNMSRGQQQL). Basic and acidic residues-rich tracts occupy residues 737–747 (QEDKKKIKTES) and 755–771 (YKRD…KIDD). Residues Ser774 and Ser780 each carry the phosphoserine modification. A compositionally biased stretch (basic and acidic residues) spans 812 to 823 (MRSELKTKEQIL). Residues 864–874 (PSRKGKMRKRM) show a composition bias toward basic residues.

This sequence belongs to the DEAD box helicase family. DDX54/DBP10 subfamily. As to quaternary structure, interacts in a hormone-dependent manner with nuclear receptors.

The protein resides in the nucleus. It is found in the nucleolus. It catalyses the reaction ATP + H2O = ADP + phosphate + H(+). Its function is as follows. Has RNA-dependent ATPase activity. Represses the transcriptional activity of nuclear receptors. The sequence is that of ATP-dependent RNA helicase DDX54 (Ddx54) from Mus musculus (Mouse).